The chain runs to 171 residues: Large ribosomal subunit protein uL22 (171 aa).

Belongs to the universal ribosomal protein uL22 family.

This is Large ribosomal subunit protein uL22 (RPL17) from Zea mays (Maize).